A 330-amino-acid polypeptide reads, in one-letter code: Tryptophan--tRNA ligase (330 aa).

ATP contacts are provided by residues 10–12 and 18–19; these read QAT and GN. A 'HIGH' region motif is present at residues 11–19; that stretch reads ATGSLHLGN. Asp134 is a binding site for L-tryptophan. Residues 146 to 148, Ile186, and 195 to 199 each bind ATP; these read GED and KMSKS. The 'KMSKS' region motif lies at 195-199; it reads KMSKS.

Belongs to the class-I aminoacyl-tRNA synthetase family. Homodimer.

It localises to the cytoplasm. The catalysed reaction is tRNA(Trp) + L-tryptophan + ATP = L-tryptophyl-tRNA(Trp) + AMP + diphosphate + H(+). Functionally, catalyzes the attachment of tryptophan to tRNA(Trp). The sequence is that of Tryptophan--tRNA ligase from Rickettsia conorii (strain ATCC VR-613 / Malish 7).